The sequence spans 223 residues: Translation initiation factor 6 (223 aa).

The protein belongs to the eIF-6 family.

In terms of biological role, binds to the 50S ribosomal subunit and prevents its association with the 30S ribosomal subunit to form the 70S initiation complex. This chain is Translation initiation factor 6, found in Sulfurisphaera tokodaii (strain DSM 16993 / JCM 10545 / NBRC 100140 / 7) (Sulfolobus tokodaii).